Reading from the N-terminus, the 1103-residue chain is Coatomer subunit beta (1103 aa).

HEAT repeat units lie at residues 51–89 (EAYT…CRPD), 94–129 (EEMI…RQFK), 130–166 (VLEP…NFGL), 247–284 (QQKA…APVS), 322–359 (RTME…KNSV), 365–404 (VLKR…RFPE), and 405–441 (AAAS…TCVH).

As to quaternary structure, oligomeric complex that consists of at least the alpha, beta, beta', gamma, delta, epsilon and zeta subunits.

It localises to the cytoplasm. Its subcellular location is the golgi apparatus membrane. The protein resides in the cytoplasmic vesicle. It is found in the COPI-coated vesicle membrane. The coatomer is a cytosolic protein complex that binds to dilysine motifs and reversibly associates with Golgi non-clathrin-coated vesicles, which further mediate biosynthetic protein transport from the ER, via the Golgi up to the trans Golgi network. Coatomer complex is required for budding from Golgi membranes, and is essential for the retrograde Golgi-to-ER transport of dilysine-tagged proteins. The chain is Coatomer subunit beta from Toxoplasma gondii.